Reading from the N-terminus, the 183-residue chain is UPF0200 protein MmarC7_0527 (183 aa).

8–15 (GMPGSGKS) contacts ATP.

Belongs to the UPF0200 family.

The protein is UPF0200 protein MmarC7_0527 of Methanococcus maripaludis (strain C7 / ATCC BAA-1331).